The chain runs to 544 residues: Methyl-accepting chemotaxis protein McpP (544 aa).

3 helical membrane-spanning segments follow: residues 12–32 (RLWL…LLML), 50–70 (VVQT…AGTL), and 192–212 (DASL…MLIA). In terms of domain architecture, HAMP spans 213–267 (RSIARPLQEAVQAMGNIASGESDLTRRLDTHGSDEITHLGEHFNRFNGKLQGVVG). The Methyl-accepting transducer domain occupies 272-508 (AAHALAQSAG…EINRNVLDTA (237 aa)).

It belongs to the methyl-accepting chemotaxis (MCP) protein family.

It is found in the cell membrane. Its function is as follows. Chemotactic-signal transducers respond to changes in the concentration of attractants and repellents in the environment, transduce a signal from the outside to the inside of the cell, and facilitate sensory adaptation through the variation of the level of methylation. McpP is a chemoreceptor that responds specifically to some C2 and C3 carboxylic acids. Recognizes acetate, pyruvate, propionate, and L-lactate. In Pseudomonas putida (strain ATCC 47054 / DSM 6125 / CFBP 8728 / NCIMB 11950 / KT2440), this protein is Methyl-accepting chemotaxis protein McpP.